We begin with the raw amino-acid sequence, 448 residues long: UDP-N-acetylmuramoyl-L-alanine--L-glutamate ligase (448 aa).

Residue 118–124 (GSKGKST) coordinates ATP.

The protein belongs to the MurCDEF family. MurD2 subfamily.

Its subcellular location is the cytoplasm. It catalyses the reaction UDP-N-acetyl-alpha-D-muramoyl-L-alanine + L-glutamate + ATP = UDP-N-acetyl-alpha-D-muramoyl-L-alanyl-L-glutamate + ADP + phosphate + H(+). The protein operates within cell wall biogenesis; peptidoglycan biosynthesis. Its function is as follows. Cell wall formation. Catalyzes the addition of L-glutamate to the nucleotide precursor UDP-N-acetylmuramoyl-L-alanine. This Salinispora tropica (strain ATCC BAA-916 / DSM 44818 / JCM 13857 / NBRC 105044 / CNB-440) protein is UDP-N-acetylmuramoyl-L-alanine--L-glutamate ligase.